We begin with the raw amino-acid sequence, 306 residues long: C-type lectin domain family 10 member A (306 aa).

Topologically, residues 1–37 are cytoplasmic; it reads MTMAYENFQNLGSEEKNQEAGKAPPQSFLCNILSWTH. A helical; Signal-anchor for type II membrane protein membrane pass occupies residues 38–58; sequence LLLFSLGLSLLLLVVISVIGS. At 59–306 the chain is on the extracellular side; that stretch reads QNSQLRRDLE…VCEMKLAKDS (248 aa). Asparagine 76 and asparagine 168 each carry an N-linked (GlcNAc...) asparagine glycan. The C-type lectin domain occupies 174-300; the sequence is CCPLHWMEHE…QRPYRWVCEM (127 aa). Cystine bridges form between cysteine 175–cysteine 186, cysteine 203–cysteine 298, and cysteine 276–cysteine 290.

Homooligomer.

It localises to the membrane. Functionally, recognizes terminal galactose and N-acetylgalactosamine units. The sequence is that of C-type lectin domain family 10 member A (Clec10a) from Rattus norvegicus (Rat).